Reading from the N-terminus, the 990-residue chain is Nucleotide-binding leucine-rich repeat (NLR)-like protein (990 aa).

The purine nucleoside phosphorylase domain stretch occupies residues glycine 22–leucine 304. Residues arginine 334–glutamate 563 form the NB-ARC domain. 6 TPR repeats span residues arginine 732–alanine 765, isoleucine 774–valine 807, leucine 816–alanine 849, leucine 858–threonine 891, leucine 900–valine 933, and leucine 942–aspartate 975. The tract at residues glutamine 965–lysine 990 is disordered. Over residues lysine 981–lysine 990 the composition is skewed to basic residues.

The catalysed reaction is ATP + H2O = D-ribose 5-triphosphate + adenine. It catalyses the reaction dATP + H2O = 2-deoxyribose 5-triphosphate + adenine. The N-terminal purine nucleoside phosphorylase (PNP) domain cleaves the N-glycosidic bond of ATP, and to a lesser extent dATP; has very weak activity on adenosine and deoxyadenosine and no activity on (d)ADP or (d)AMP. The polypeptide is Nucleotide-binding leucine-rich repeat (NLR)-like protein (Hyaloscypha variabilis (strain UAMH 11265 / GT02V1 / F) (Meliniomyces variabilis)).